A 281-amino-acid polypeptide reads, in one-letter code: Pantothenate synthetase (281 aa).

30–37 (MGNLHQGH) lines the ATP pocket. The active-site Proton donor is the His37. Gln61 contacts (R)-pantoate. Gln61 is a beta-alanine binding site. 149-152 (GNKD) is an ATP binding site. (R)-pantoate is bound at residue Gln155. ATP contacts are provided by residues Ile178 and 186–189 (MSSR).

This sequence belongs to the pantothenate synthetase family. As to quaternary structure, homodimer.

The protein localises to the cytoplasm. The enzyme catalyses (R)-pantoate + beta-alanine + ATP = (R)-pantothenate + AMP + diphosphate + H(+). Its pathway is cofactor biosynthesis; (R)-pantothenate biosynthesis; (R)-pantothenate from (R)-pantoate and beta-alanine: step 1/1. Its function is as follows. Catalyzes the condensation of pantoate with beta-alanine in an ATP-dependent reaction via a pantoyl-adenylate intermediate. This Shewanella sp. (strain ANA-3) protein is Pantothenate synthetase.